A 610-amino-acid chain; its full sequence is Aspartate--tRNA(Asp/Asn) ligase (610 aa).

Glu-177 is a binding site for L-aspartate. An aspartate region spans residues Gln-201–Lys-204. Arg-223 is a binding site for L-aspartate. Residues Arg-223 to Glu-225 and Gln-232 each bind ATP. His-461 is an L-aspartate binding site. Glu-499 contributes to the ATP binding site. Residue Arg-506 participates in L-aspartate binding. Gly-551–Arg-554 contacts ATP.

This sequence belongs to the class-II aminoacyl-tRNA synthetase family. Type 1 subfamily. As to quaternary structure, homodimer.

It localises to the cytoplasm. It carries out the reaction tRNA(Asx) + L-aspartate + ATP = L-aspartyl-tRNA(Asx) + AMP + diphosphate. Aspartyl-tRNA synthetase with relaxed tRNA specificity since it is able to aspartylate not only its cognate tRNA(Asp) but also tRNA(Asn). Reaction proceeds in two steps: L-aspartate is first activated by ATP to form Asp-AMP and then transferred to the acceptor end of tRNA(Asp/Asn). This Parasynechococcus marenigrum (strain WH8102) protein is Aspartate--tRNA(Asp/Asn) ligase.